Reading from the N-terminus, the 480-residue chain is UDP-glycosyltransferase 72B2 (480 aa).

Residues S277, 347-349, 364-372, and 386-389 contribute to the UDP-alpha-D-glucose site; these read APQ, HCGWNSTLE, and FAEQ.

It belongs to the UDP-glycosyltransferase family.

The polypeptide is UDP-glycosyltransferase 72B2 (UGT72B2) (Arabidopsis thaliana (Mouse-ear cress)).